The primary structure comprises 189 residues: NADH dehydrogenase [ubiquinone] 1 beta subcomplex subunit 5, mitochondrial (189 aa).

The transit peptide at 1-46 directs the protein to the mitochondrion; the sequence is MAGMSLLRRVSVTAVAALSGRSLGTRLGFGGFLTRGFPKAVAPVRH. The chain crosses the membrane as a helical span at residues 73–93; the sequence is FYIALTGIPVVIIITLVNVFI.

The protein belongs to the complex I NDUFB5 subunit family. Complex I is composed of 45 different subunits.

Its subcellular location is the mitochondrion inner membrane. Functionally, accessory subunit of the mitochondrial membrane respiratory chain NADH dehydrogenase (Complex I), that is believed not to be involved in catalysis. Complex I functions in the transfer of electrons from NADH to the respiratory chain. The immediate electron acceptor for the enzyme is believed to be ubiquinone. The sequence is that of NADH dehydrogenase [ubiquinone] 1 beta subcomplex subunit 5, mitochondrial (NDUFB5) from Macaca fascicularis (Crab-eating macaque).